The primary structure comprises 239 residues: Sugar fermentation stimulation protein homolog (239 aa).

Belongs to the SfsA family.

The protein is Sugar fermentation stimulation protein homolog of Microcystis aeruginosa (strain NIES-843 / IAM M-2473).